The following is a 559-amino-acid chain: Glutamine--tRNA ligase (559 aa).

The 'HIGH' region signature appears at 44-54 (PEPNGYLHIGH). Residues 45-47 (EPN) and 51-57 (HIGHAKS) contribute to the ATP site. L-glutamine is bound by residues D77 and Y222. ATP contacts are provided by residues T241 and 272-273 (RL). Positions 279 to 283 (LTSKR) match the 'KMSKS' region motif.

It belongs to the class-I aminoacyl-tRNA synthetase family. In terms of assembly, monomer.

It localises to the cytoplasm. It carries out the reaction tRNA(Gln) + L-glutamine + ATP = L-glutaminyl-tRNA(Gln) + AMP + diphosphate. This is Glutamine--tRNA ligase from Actinobacillus succinogenes (strain ATCC 55618 / DSM 22257 / CCUG 43843 / 130Z).